The sequence spans 195 residues: Insertion element IS136 uncharacterized protein Atu4601 (195 aa).

One can recognise an Integrase catalytic domain in the interval 25 to 194 (MVMRSNLRWC…SPRQFIRAKS (170 aa)).

This is Insertion element IS136 uncharacterized protein Atu4601 from Agrobacterium fabrum (strain C58 / ATCC 33970) (Agrobacterium tumefaciens (strain C58)).